The primary structure comprises 847 residues: A-kinase anchor protein 4 (847 aa).

Residues 1 to 187 (MIAYCGTTKM…MAASKNTNNN (187 aa)) constitute a propeptide that is removed on maturation. Phosphoserine is present on residues S95, S129, S189, and S203. Residues 182–204 (KNTNNNQSPSNPATKSPSNQRSV) show a composition bias toward polar residues. The disordered stretch occupies residues 182–209 (KNTNNNQSPSNPATKSPSNQRSVATPDG). T206 is subject to Phosphothreonine. Phosphoserine occurs at positions 212, 225, and 270. The segment at 218 to 231 (YYVNRLSSLVIQMA) is interaction with Prkar1a and Prkar2a. Y300 is modified (phosphotyrosine). Phosphoserine is present on residues S301, S304, S340, S430, S441, S443, S462, S491, S496, and S503. The PKA-RI subunit binding domain stretch occupies residues 334–343 (YANQVASDMM). Phosphothreonine is present on T505. The interval 511–536 (KQGTQGRVPNKVCPSKDEKREKISPS) is disordered. The segment covering 524–533 (PSKDEKREKI) has biased composition (basic and acidic residues). A phosphoserine mark is found at S536 and S581. The disordered stretch occupies residues 583–613 (QYEKSGGGQSSKSLSMKHFESRGAPGPSTCA). Residues S626, S631, S648, S650, S674, S677, S700, and S729 each carry the phosphoserine modification. The disordered stretch occupies residues 655–677 (CCDSRSKQAAPVAKRPEDQSQDS).

This sequence belongs to the AKAP110 family. In terms of assembly, interacts with PRKAR1A and PRKAR2A. Interacts with ENO4. Interacts with QRICH2. In terms of processing, phosphorylated by STK33 during sperm flagella assembly. In terms of tissue distribution, expressed in flagella of epididymal sperm.

The protein localises to the cell projection. The protein resides in the cilium. Its subcellular location is the flagellum. Functionally, major structural component of sperm fibrous sheath. May play a role in sperm motility. The chain is A-kinase anchor protein 4 from Rattus norvegicus (Rat).